The following is a 405-amino-acid chain: 8-amino-7-oxononanoate synthase (405 aa).

Arginine 23 is a binding site for substrate. 114-115 (GY) serves as a coordination point for pyridoxal 5'-phosphate. A substrate-binding site is contributed by histidine 139. Positions 185, 213, and 245 each coordinate pyridoxal 5'-phosphate. Lysine 248 is subject to N6-(pyridoxal phosphate)lysine. A substrate-binding site is contributed by threonine 366.

This sequence belongs to the class-II pyridoxal-phosphate-dependent aminotransferase family. BioF subfamily. As to quaternary structure, homodimer. Pyridoxal 5'-phosphate is required as a cofactor.

It catalyses the reaction 6-carboxyhexanoyl-[ACP] + L-alanine + H(+) = (8S)-8-amino-7-oxononanoate + holo-[ACP] + CO2. The protein operates within cofactor biosynthesis; biotin biosynthesis. Functionally, catalyzes the decarboxylative condensation of pimeloyl-[acyl-carrier protein] and L-alanine to produce 8-amino-7-oxononanoate (AON), [acyl-carrier protein], and carbon dioxide. In Delftia acidovorans (strain DSM 14801 / SPH-1), this protein is 8-amino-7-oxononanoate synthase.